The following is a 225-amino-acid chain: Ribonuclease T (225 aa).

The tract at residues 1–21 (MSEDHFDEEHEGHGGGGGSRH) is disordered. The 175-residue stretch at 33-207 (VVVDVETGGF…YDTEKTAELF (175 aa)) folds into the Exonuclease domain. Residues Asp36, Glu38, His194, and Asp199 each coordinate Mg(2+). Catalysis depends on His194, which acts as the Proton donor/acceptor.

Belongs to the RNase T family. Homodimer. It depends on Mg(2+) as a cofactor.

In terms of biological role, trims short 3' overhangs of a variety of RNA species, leaving a one or two nucleotide 3' overhang. Responsible for the end-turnover of tRNA: specifically removes the terminal AMP residue from uncharged tRNA (tRNA-C-C-A). Also appears to be involved in tRNA biosynthesis. The chain is Ribonuclease T from Pseudomonas syringae pv. tomato (strain ATCC BAA-871 / DC3000).